We begin with the raw amino-acid sequence, 252 residues long: Imidazole glycerol phosphate synthase subunit HisF (252 aa).

Active-site residues include aspartate 11 and aspartate 130.

Belongs to the HisA/HisF family. Heterodimer of HisH and HisF.

The protein localises to the cytoplasm. It carries out the reaction 5-[(5-phospho-1-deoxy-D-ribulos-1-ylimino)methylamino]-1-(5-phospho-beta-D-ribosyl)imidazole-4-carboxamide + L-glutamine = D-erythro-1-(imidazol-4-yl)glycerol 3-phosphate + 5-amino-1-(5-phospho-beta-D-ribosyl)imidazole-4-carboxamide + L-glutamate + H(+). It functions in the pathway amino-acid biosynthesis; L-histidine biosynthesis; L-histidine from 5-phospho-alpha-D-ribose 1-diphosphate: step 5/9. Its function is as follows. IGPS catalyzes the conversion of PRFAR and glutamine to IGP, AICAR and glutamate. The HisF subunit catalyzes the cyclization activity that produces IGP and AICAR from PRFAR using the ammonia provided by the HisH subunit. This chain is Imidazole glycerol phosphate synthase subunit HisF, found in Syntrophomonas wolfei subsp. wolfei (strain DSM 2245B / Goettingen).